The chain runs to 77 residues: Pollen allergen Amb p 5a (77 aa).

The N-terminal stretch at 1–22 (MNNEKNVSFEFIGSTDEVDEIK) is a signal peptide. Cystine bridges form between Cys26/Cys61, Cys33/Cys48, Cys40/Cys54, and Cys41/Cys65.

This is Pollen allergen Amb p 5a from Ambrosia psilostachya (Western ragweed).